The following is a 469-amino-acid chain: 3-isopropylmalate dehydratase large subunit (469 aa).

[4Fe-4S] cluster contacts are provided by Cys-347, Cys-410, and Cys-413.

The protein belongs to the aconitase/IPM isomerase family. LeuC type 1 subfamily. Heterodimer of LeuC and LeuD. [4Fe-4S] cluster is required as a cofactor.

The catalysed reaction is (2R,3S)-3-isopropylmalate = (2S)-2-isopropylmalate. The protein operates within amino-acid biosynthesis; L-leucine biosynthesis; L-leucine from 3-methyl-2-oxobutanoate: step 2/4. In terms of biological role, catalyzes the isomerization between 2-isopropylmalate and 3-isopropylmalate, via the formation of 2-isopropylmaleate. The polypeptide is 3-isopropylmalate dehydratase large subunit (Ralstonia nicotianae (strain ATCC BAA-1114 / GMI1000) (Ralstonia solanacearum)).